Reading from the N-terminus, the 362-residue chain is METTVRKQKKNLEMKKPSIYSLQLHEMQDWLKEQGEPKFRAGQIFDWLYKKRVKNYEDMSNLSKGLRDKLSNSFDITTLNTLVKQTSSDGTIKFLFQLYDGYSIETVLMRHEYGNSICVTTQVGCRIGCTFCASTLGGLKRNLEAGEIVAQVVEVQRALDETEERVSSLVVMGIGEPFDNYDNLMGFLRIINHEKGLHIGARHMTVSTSGIIPKIYKFAEEDLQINFAISLHAPNSELRSKLMPINRAYKLPDLMEAIKYYVNRTGRRITFEYGLFGGENDQVEHAEELAALLKGVKCHVNLIPVNYVPERDYVRTPREQIFLFEKTLKDRGVNVTIRREQGHDIDAACGQLRAKERKEETR.

Residue E105 is the Proton acceptor of the active site. Residues 111-344 enclose the Radical SAM core domain; that stretch reads HEYGNSICVT…VTIRREQGHD (234 aa). The cysteines at positions 118 and 349 are disulfide-linked. [4Fe-4S] cluster contacts are provided by C125, C129, and C132. S-adenosyl-L-methionine is bound by residues 175-176, S207, 230-232, and N306; these read GE and SLH. Catalysis depends on C349, which acts as the S-methylcysteine intermediate.

This sequence belongs to the radical SAM superfamily. RlmN family. [4Fe-4S] cluster serves as cofactor.

Its subcellular location is the cytoplasm. It catalyses the reaction adenosine(2503) in 23S rRNA + 2 reduced [2Fe-2S]-[ferredoxin] + 2 S-adenosyl-L-methionine = 2-methyladenosine(2503) in 23S rRNA + 5'-deoxyadenosine + L-methionine + 2 oxidized [2Fe-2S]-[ferredoxin] + S-adenosyl-L-homocysteine. The catalysed reaction is adenosine(37) in tRNA + 2 reduced [2Fe-2S]-[ferredoxin] + 2 S-adenosyl-L-methionine = 2-methyladenosine(37) in tRNA + 5'-deoxyadenosine + L-methionine + 2 oxidized [2Fe-2S]-[ferredoxin] + S-adenosyl-L-homocysteine. Its function is as follows. Specifically methylates position 2 of adenine 2503 in 23S rRNA and position 2 of adenine 37 in tRNAs. The protein is Probable dual-specificity RNA methyltransferase RlmN of Bacillus cereus (strain B4264).